Here is a 927-residue protein sequence, read N- to C-terminus: Phosphoenolpyruvate carboxylase (927 aa).

Catalysis depends on residues histidine 160 and lysine 589.

Belongs to the PEPCase type 1 family. Requires Mg(2+) as cofactor.

The catalysed reaction is oxaloacetate + phosphate = phosphoenolpyruvate + hydrogencarbonate. In terms of biological role, forms oxaloacetate, a four-carbon dicarboxylic acid source for the tricarboxylic acid cycle. The chain is Phosphoenolpyruvate carboxylase from Rhodopseudomonas palustris (strain BisA53).